Reading from the N-terminus, the 260-residue chain is Universal stress protein PHOS34 (260 aa).

The N-terminal 33 residues, 1–33, are a transit peptide targeting the chloroplast; the sequence is MNPDSDYPHLPNIKIHHPSSPRHSHHHSSSTPS. The tract at residues 1 to 42 is disordered; it reads MNPDSDYPHLPNIKIHHPSSPRHSHHHSSSTPSAATPTPTAG. Residues 14-28 show a composition bias toward basic residues; that stretch reads KIHHPSSPRHSHHHS. Pro18 lines the ATP pocket. Ser20 carries the phosphoserine; by MAPK3 and MAPK6 modification. Residues 29–41 show a composition bias toward low complexity; the sequence is SSTPSAATPTPTA. ATP is bound at residue Val80. Residues 92-118 form a disordered region; that stretch reads GPLPLQTPPPPSAATDPGAQPKPSQED. ATP is bound by residues 170 to 179 and 187 to 189; these read GSRGFGAEKR and SVS. Positions 209-260 are disordered; that stretch reads RDGPAPPGNVGATREAIVTVKSRRDDDDDDDEDHEAKIAAAASDHHEHIKDE. A Phosphoserine modification is found at Ser230. The span at 251-260 shows a compositional bias: basic and acidic residues; it reads SDHHEHIKDE.

The protein belongs to the universal stress protein A family. Phosphorylated by MAPK3 and MAPK6 after pathogenic elicitation (e.g. bacterial flg22, Phytophthora infestans zoospores and xylanase).

It is found in the plastid. The protein resides in the chloroplast. In Arabidopsis thaliana (Mouse-ear cress), this protein is Universal stress protein PHOS34.